The sequence spans 431 residues: Galactose-3-O-sulfotransferase 3 (431 aa).

The Cytoplasmic segment spans residues 1-19 (MPPILQRLQQATKMMSRRK). Residues 20-40 (ILLLVLGCSTVSLLIHQGAQL) traverse the membrane as a helical; Signal-anchor for type II membrane protein segment. Residues 41–431 (SWYPKLFPLS…RVLPRGPQGP (391 aa)) lie on the Lumenal side of the membrane. N-linked (GlcNAc...) asparagine glycans are attached at residues Asn-91, Asn-110, Asn-177, and Asn-302. Residues 399–431 (QKRRGGARARPEPVLDNPPPRPIRVLPRGPQGP) are disordered.

The protein belongs to the galactose-3-O-sulfotransferase family. It depends on Mg(2+) as a cofactor. As to expression, highly expressed in thyroid, brain, kidney, heart and spinal cord.

Its subcellular location is the golgi apparatus. The protein localises to the golgi stack membrane. It functions in the pathway protein modification; carbohydrate sulfation. In terms of biological role, transfers a sulfate to position 3 of non-reducing beta-galactosyl residues in N-glycans and core2-branched O-glycans. Has high activity towards Gal-beta-1,4-GlcNAc, Gal-beta-1,4(Fuc-alpha-1,3)GlcNAc and lower activity towards Gal-beta-1,3(Fuc-alpha-1,4)GlcNAc. The polypeptide is Galactose-3-O-sulfotransferase 3 (GAL3ST3) (Homo sapiens (Human)).